Consider the following 568-residue polypeptide: MHAQDKGGILPALSLLLIAVAMVSPSQAAYKLQERYSWNQLDFAFPNARLKEQALASGDYIPTNALPVGVEHFGNRLFVTVPRWRDGIPATLTYINMDHSVTGSPELIPYPDWRANTAGDCANSITTAYRIKVDECGRLWVLDTGTVGIGNTTTNPCPYAINIFDLTTNTRIRRYELPAADTNPNTFIANIAVDIGKNCDDAFAYFADELGYGLISYSWELNKSWRFSAHSYFFPDPLRGDFNVAGINFQWGEEGIFGMSLTPIRSDGYRTLYFSPLASHRQFAVSTRILRDETRTEDSYHDFVALDERGPNAHTTSRVMSDDGVELFNLIDQNAVGCWHSSMPYSPQSHGIVDRDDVGLVFPADVKIDENKNVWVLSDRMPVFLLSDLDYSDTNFRIYTAPLATLIENTVCDLRNNAYGPPNTVSIPKQAAPGHSAVGPPLYTTTNQYRSLLSQKPQTSWGPSLPSRNYLPALNGNPGIPGSRNNLNNLGAPGQVVSSVSVSTNTVGPSGIEVPKAYVFNQHNGLNYETSGPHLFPTLQPAPSQLGGGLKTYVNARQSGWWLHQQQG.

The first 28 residues, 1–28 (MHAQDKGGILPALSLLLIAVAMVSPSQA), serve as a signal peptide directing secretion. N-linked (GlcNAc...) asparagine glycans are attached at residues Asn-151 and Asn-222.

This sequence belongs to the major royal jelly protein family.

It localises to the secreted. Controls the pigmentation pattern of the adult cuticle and larval mouth parts. In Drosophila madeirensis (Fruit fly), this protein is Protein yellow (y).